The following is a 340-amino-acid chain: DNA repair protein RAD51 homolog A (340 aa).

Residues 1–14 show a composition bias toward low complexity; it reads MSSAAQQQQKAAAA. The interval 1-21 is disordered; it reads MSSAAQQQQKAAAAEQEEVEH. Residues 49–78 form the HhH domain; it reads TVEAVAYTPRKDLLQIKGISEAKADKIIEA. 128–135 lines the ATP pocket; sequence GEFRSGKT.

Belongs to the RecA family. RAD51 subfamily. Self-associates and may interact with XRCC3 homolog. Highly expressed in mitotic and meiotic tissues, but low levels in differentiated tissues.

The protein localises to the nucleus. Its function is as follows. Binds to single and double-stranded DNA and exhibits DNA-dependent ATPase activity. Unwinds duplex DNA. Component of the meiotic recombination pathway. Seems to play a role in mediating chromosome homology search, chromosome pairing and synapsis at early stages and probably chromosome crossing-over at later stages in meiosis. Probably is involved in the repair of meiotic double strand breaks (DBSs) and in homologous recombination. The polypeptide is DNA repair protein RAD51 homolog A (RAD51A) (Zea mays (Maize)).